The primary structure comprises 537 residues: Putative cysteine ligase BshC (537 aa).

Residues 422–450 (IEKVEGMIEQQRRLNKDLLDEVAGNQNNI) adopt a coiled-coil conformation.

It belongs to the BshC family.

Involved in bacillithiol (BSH) biosynthesis. May catalyze the last step of the pathway, the addition of cysteine to glucosamine malate (GlcN-Mal) to generate BSH. This Staphylococcus aureus (strain USA300) protein is Putative cysteine ligase BshC.